A 301-amino-acid chain; its full sequence is Acetyl-coenzyme A carboxylase carboxyl transferase subunit beta (301 aa).

The 270-residue stretch at 25–294 (LWIKCPETGE…SAANDMNSGA (270 aa)) folds into the CoA carboxyltransferase N-terminal domain.

The protein belongs to the AccD/PCCB family. In terms of assembly, acetyl-CoA carboxylase is a heterohexamer composed of biotin carboxyl carrier protein (AccB), biotin carboxylase (AccC) and two subunits each of ACCase subunit alpha (AccA) and ACCase subunit beta (AccD).

It is found in the cytoplasm. It carries out the reaction N(6)-carboxybiotinyl-L-lysyl-[protein] + acetyl-CoA = N(6)-biotinyl-L-lysyl-[protein] + malonyl-CoA. The protein operates within lipid metabolism; malonyl-CoA biosynthesis; malonyl-CoA from acetyl-CoA: step 1/1. Its function is as follows. Component of the acetyl coenzyme A carboxylase (ACC) complex. Biotin carboxylase (BC) catalyzes the carboxylation of biotin on its carrier protein (BCCP) and then the CO(2) group is transferred by the transcarboxylase to acetyl-CoA to form malonyl-CoA. The protein is Acetyl-coenzyme A carboxylase carboxyl transferase subunit beta of Rhizobium leguminosarum bv. trifolii (strain WSM1325).